The following is a 98-amino-acid chain: YcgL domain-containing protein Ping_1076 (98 aa).

The 85-residue stretch at 1–85 (MLCAVYKSIR…PPVNHLQEHK (85 aa)) folds into the YcgL domain. The segment at 75 to 98 (PPPVNHLQEHKDWKKKRQENKNEI) is disordered.

In Psychromonas ingrahamii (strain DSM 17664 / CCUG 51855 / 37), this protein is YcgL domain-containing protein Ping_1076.